The following is a 181-amino-acid chain: Sodium/potassium-transporting ATPase subunit beta-1-interacting protein 3 (181 aa).

4 consecutive transmembrane segments (helical) span residues 2–22, 35–55, 62–82, and 152–172; these read GCCTGRCSLVCLCALQLLSAL, APILGNFLHIIVVILGLFGTI, IMVYTVWTALWVTWNVFIICF, and VQILLSLVGFVYACYVISISM.

The protein belongs to the NKAIN family. Interacts with ATP1B1. In terms of tissue distribution, detected in the brain only and specifically in neurons. Expressed in multiple regions such as cerebral cortex, thalamus, hippocampus, olfactory bulb and brainstem as well as in cerebellum with low expression in granular cell layer.

It localises to the cell membrane. This chain is Sodium/potassium-transporting ATPase subunit beta-1-interacting protein 3 (Nkain3), found in Mus musculus (Mouse).